Here is a 498-residue protein sequence, read N- to C-terminus: Ammonium transporter 1 member 1 (498 aa).

Transmembrane regions (helical) follow at residues Leu-39–Gly-59, Val-74–Gly-94, Phe-120–Ala-140, Tyr-148–Trp-168, Phe-192–Ile-212, Leu-236–Phe-256, Ser-274–Phe-296, Val-307–Val-327, Trp-331–Ala-351, Leu-360–Phe-380, and Val-411–Gly-431.

Belongs to the ammonia transporter channel (TC 1.A.11.2) family. Expressed in roots and shoots.

Its subcellular location is the membrane. Its function is as follows. Ammonium transporter probably involved in ammonium uptake from the soil. The chain is Ammonium transporter 1 member 1 (AMT1-1) from Oryza sativa subsp. japonica (Rice).